The following is a 350-amino-acid chain: UBX domain-containing protein 2B (350 aa).

Acidic residues predominate over residues 1 to 29; that stretch reads MEERENSEEGDDGAGEEEEEDQGSGEDGG. The segment at 1–46 is disordered; that stretch reads MEERENSEEGDDGAGEEEEEDQGSGEDGGEVGAEREQEAELKDSLR. Positions 32-45 are enriched in basic and acidic residues; the sequence is GAEREQEAELKDSL. The SEP domain maps to 160–225; the sequence is EIQILLKLWS…MEDHQDQEYI (66 aa). Residues 271–348 form the UBX domain; that stretch reads EHVPTTKIQI…DILNTVILQR (78 aa).

Belongs to the NSFL1C family.

The protein resides in the nucleus. Its subcellular location is the cytoplasm. It localises to the cytosol. It is found in the endoplasmic reticulum. The protein localises to the golgi apparatus. The protein resides in the cytoskeleton. Its subcellular location is the microtubule organizing center. It localises to the centrosome. In terms of biological role, adapter protein required for Golgi and endoplasmic reticulum biogenesis. Involved in Golgi and endoplasmic reticulum maintenance during interphase and in their reassembly at the end of mitosis. Regulates the centrosomal levels of kinase aurka-a/Aurora A during mitotic progression by promoting aurka-a removal from centrosomes in prophase. Also, regulates spindle orientation during mitosis. This Xenopus laevis (African clawed frog) protein is UBX domain-containing protein 2B (ubxn2b).